The sequence spans 86 residues: Progonadoliberin IIB (86 aa).

Positions 1-24 are cleaved as a signal peptide; it reads MVHICRLFVVMGMLMFLSVQFASS. Glutamine 25 bears the Pyrrolidone carboxylic acid mark. Residue glycine 34 is modified to Glycine amide.

This sequence belongs to the GnRH family. As to expression, olfactory bulbs, hypothalamus and telencephalon, midbrain and posterior brain areas.

The protein localises to the secreted. In terms of biological role, stimulates the secretion of gonadotropins. This Carassius auratus (Goldfish) protein is Progonadoliberin IIB (gnrh2b).